Reading from the N-terminus, the 288-residue chain is Dichloromethane dehalogenase (288 aa).

A GST N-terminal domain is found at 12 to 94 (KTLRLLYHPA…YVNEKFDGAG (83 aa)). One can recognise a GST C-terminal domain in the interval 100 to 252 (GTQERAQINQ…ASMFKRKTAV (153 aa)).

This sequence belongs to the GST superfamily. As to quaternary structure, homohexamer.

Its subcellular location is the cytoplasm. It carries out the reaction dichloromethane + H2O = formaldehyde + 2 chloride + 2 H(+). It functions in the pathway xenobiotic degradation; dichloromethane degradation. The polypeptide is Dichloromethane dehalogenase (dcmA) (Methylorubrum extorquens (strain DSM 6343 / CIP 106787 / DM4) (Methylobacterium extorquens)).